A 464-amino-acid polypeptide reads, in one-letter code: MKNTVLIKKIYRETDQFLSKEVMISGWIRTLRASNAFGFIEINDGSFFKNIQVVFDDKLGNFKEISKLPISSSISVVGTLVATPDAKQPFEIQAKEIVIEGMSNSDYPLQKKRHTFEYLRSIAHLRPRSNAFSATFRVRSVAAFAIHKFFQEQGFVYTHTPIITGSDCEGAGEMFRVTTLDPKAPELTKEGNIDYTKDFFGKETNLTVSGQLNAECFALAFRNIYTFGPTFRAENSNTTRHAAEFWMIEPEIAFADLQDDMELAEAMLKYVIKYVMDECPEELQFFNSFVDKGLLERLNHVVSSDFAKVTYTEAVEILEKCDKEFDYDVSWGIDLQTEHERYLTEEHFKKPLFVTDYPKEIKAFYMRMNEDNKTVAATDLLVPGIGEIIGGSQREERLDVLEARMAELGLKKEDYWWYLELRKYGETKHAGFGLGFERLIMYITGMTNIRDVIPFPRTPGTSEF.

This sequence belongs to the class-II aminoacyl-tRNA synthetase family. In terms of assembly, homodimer.

The protein localises to the cytoplasm. The enzyme catalyses tRNA(Asn) + L-asparagine + ATP = L-asparaginyl-tRNA(Asn) + AMP + diphosphate + H(+). The protein is Asparagine--tRNA ligase of Clostridium botulinum (strain Alaska E43 / Type E3).